Here is a 550-residue protein sequence, read N- to C-terminus: 2-succinyl-5-enolpyruvyl-6-hydroxy-3-cyclohexene-1-carboxylate synthase (550 aa).

It belongs to the TPP enzyme family. MenD subfamily. Homodimer. Mg(2+) is required as a cofactor. The cofactor is Mn(2+). Requires thiamine diphosphate as cofactor.

It catalyses the reaction isochorismate + 2-oxoglutarate + H(+) = 5-enolpyruvoyl-6-hydroxy-2-succinyl-cyclohex-3-ene-1-carboxylate + CO2. It functions in the pathway quinol/quinone metabolism; 1,4-dihydroxy-2-naphthoate biosynthesis; 1,4-dihydroxy-2-naphthoate from chorismate: step 2/7. Its pathway is quinol/quinone metabolism; menaquinone biosynthesis. Its function is as follows. Catalyzes the thiamine diphosphate-dependent decarboxylation of 2-oxoglutarate and the subsequent addition of the resulting succinic semialdehyde-thiamine pyrophosphate anion to isochorismate to yield 2-succinyl-5-enolpyruvyl-6-hydroxy-3-cyclohexene-1-carboxylate (SEPHCHC). The protein is 2-succinyl-5-enolpyruvyl-6-hydroxy-3-cyclohexene-1-carboxylate synthase of Desulfitobacterium hafniense (strain DSM 10664 / DCB-2).